We begin with the raw amino-acid sequence, 249 residues long: Coproheme decarboxylase (249 aa).

Residues Arg131, 145-149 (YPMDK), His172, and Gln185 contribute to the Fe-coproporphyrin III site. Residue Tyr145 is part of the active site.

Belongs to the ChdC family. Type 1 subfamily. Requires Fe-coproporphyrin III as cofactor.

It carries out the reaction Fe-coproporphyrin III + 2 H2O2 + 2 H(+) = heme b + 2 CO2 + 4 H2O. It catalyses the reaction Fe-coproporphyrin III + H2O2 + H(+) = harderoheme III + CO2 + 2 H2O. The enzyme catalyses harderoheme III + H2O2 + H(+) = heme b + CO2 + 2 H2O. The protein operates within porphyrin-containing compound metabolism; protoheme biosynthesis. Its function is as follows. Involved in coproporphyrin-dependent heme b biosynthesis. Catalyzes the decarboxylation of Fe-coproporphyrin III (coproheme) to heme b (protoheme IX), the last step of the pathway. The reaction occurs in a stepwise manner with a three-propionate intermediate. The polypeptide is Coproheme decarboxylase (Staphylococcus haemolyticus (strain JCSC1435)).